The following is a 122-amino-acid chain: Large ribosomal subunit protein uL14c (122 aa).

The protein belongs to the universal ribosomal protein uL14 family. In terms of assembly, part of the 50S ribosomal subunit.

The protein resides in the plastid. Its subcellular location is the chloroplast. Its function is as follows. Binds to 23S rRNA. The chain is Large ribosomal subunit protein uL14c from Glycine max (Soybean).